The following is a 224-amino-acid chain: Protein GrpE (224 aa).

The tract at residues 27-77 (NQASEDIDQENQSEVVDDTTENEDASEEVYEEDTASEDGSKEKKSFFKKKE) is disordered. The span at 31–62 (EDIDQENQSEVVDDTTENEDASEEVYEEDTAS) shows a compositional bias: acidic residues.

This sequence belongs to the GrpE family. As to quaternary structure, homodimer.

It localises to the cytoplasm. In terms of biological role, participates actively in the response to hyperosmotic and heat shock by preventing the aggregation of stress-denatured proteins, in association with DnaK and GrpE. It is the nucleotide exchange factor for DnaK and may function as a thermosensor. Unfolded proteins bind initially to DnaJ; upon interaction with the DnaJ-bound protein, DnaK hydrolyzes its bound ATP, resulting in the formation of a stable complex. GrpE releases ADP from DnaK; ATP binding to DnaK triggers the release of the substrate protein, thus completing the reaction cycle. Several rounds of ATP-dependent interactions between DnaJ, DnaK and GrpE are required for fully efficient folding. This is Protein GrpE from Lachnoclostridium phytofermentans (strain ATCC 700394 / DSM 18823 / ISDg) (Clostridium phytofermentans).